The primary structure comprises 163 residues: Aspartate 1-decarboxylase (163 aa).

S25 (schiff-base intermediate with substrate; via pyruvic acid) is an active-site residue. The residue at position 25 (S25) is a Pyruvic acid (Ser). Residue T57 coordinates substrate. Y58 (proton donor) is an active-site residue. 73-75 (GAA) serves as a coordination point for substrate.

It belongs to the PanD family. Heterooctamer of four alpha and four beta subunits. Pyruvate serves as cofactor. Post-translationally, is synthesized initially as an inactive proenzyme, which is activated by self-cleavage at a specific serine bond to produce a beta-subunit with a hydroxyl group at its C-terminus and an alpha-subunit with a pyruvoyl group at its N-terminus.

It localises to the cytoplasm. The catalysed reaction is L-aspartate + H(+) = beta-alanine + CO2. It functions in the pathway cofactor biosynthesis; (R)-pantothenate biosynthesis; beta-alanine from L-aspartate: step 1/1. Catalyzes the pyruvoyl-dependent decarboxylation of aspartate to produce beta-alanine. The protein is Aspartate 1-decarboxylase of Saccharopolyspora erythraea (strain ATCC 11635 / DSM 40517 / JCM 4748 / NBRC 13426 / NCIMB 8594 / NRRL 2338).